We begin with the raw amino-acid sequence, 316 residues long: MQSSDETDILATIGTRGSPLALAQAHEVRDRLARAHQVAPERIAIKTIRTSGDAIQDRPLFDVGGKGLFTKEIEEALLAGTIDFAVHSSKDVPTFLPDATWLPAFLPREDVRDVFISPHAGSLNDLPAGATVGTASLRRQAMVLKLRPDLKVNSLRGNVETRLRKISVGEADATLLALAGLNRLGLQDKATRILETDEFLPAVGQGAIAIESRRDDDRINAFVKAIGDPETEVALSAERSFLALLDGSCRTPIGGHCRVNGDRIDFRGLIISPDGTEFYETTREGARADAAALGADAAHELRERAGEKFFTLFAGA.

Residue Cys249 is modified to S-(dipyrrolylmethanemethyl)cysteine.

It belongs to the HMBS family. In terms of assembly, monomer. Dipyrromethane is required as a cofactor.

It catalyses the reaction 4 porphobilinogen + H2O = hydroxymethylbilane + 4 NH4(+). It participates in porphyrin-containing compound metabolism; protoporphyrin-IX biosynthesis; coproporphyrinogen-III from 5-aminolevulinate: step 2/4. Its function is as follows. Tetrapolymerization of the monopyrrole PBG into the hydroxymethylbilane pre-uroporphyrinogen in several discrete steps. The polypeptide is Porphobilinogen deaminase (Nitrobacter winogradskyi (strain ATCC 25391 / DSM 10237 / CIP 104748 / NCIMB 11846 / Nb-255)).